A 342-amino-acid chain; its full sequence is UDP-N-acetylenolpyruvoylglucosamine reductase (342 aa).

An FAD-binding PCMH-type domain is found at 13-183 (IDHNAQHIVC…VAVGLRLPKE (171 aa)). Arginine 159 is an active-site residue. The Proton donor role is filled by serine 229. Glutamate 325 is an active-site residue.

Belongs to the MurB family. The cofactor is FAD.

The protein localises to the cytoplasm. The enzyme catalyses UDP-N-acetyl-alpha-D-muramate + NADP(+) = UDP-N-acetyl-3-O-(1-carboxyvinyl)-alpha-D-glucosamine + NADPH + H(+). It participates in cell wall biogenesis; peptidoglycan biosynthesis. Its function is as follows. Cell wall formation. This Shigella dysenteriae serotype 1 (strain Sd197) protein is UDP-N-acetylenolpyruvoylglucosamine reductase.